The sequence spans 72 residues: Translation initiation factor IF-1 1 (72 aa).

The region spanning 1 to 72 (MSKEDVIQMQ…TKGRIVFRAK (72 aa)) is the S1-like domain.

It belongs to the IF-1 family. Component of the 30S ribosomal translation pre-initiation complex which assembles on the 30S ribosome in the order IF-2 and IF-3, IF-1 and N-formylmethionyl-tRNA(fMet); mRNA recruitment can occur at any time during PIC assembly.

It localises to the cytoplasm. Functionally, one of the essential components for the initiation of protein synthesis. Stabilizes the binding of IF-2 and IF-3 on the 30S subunit to which N-formylmethionyl-tRNA(fMet) subsequently binds. Helps modulate mRNA selection, yielding the 30S pre-initiation complex (PIC). Upon addition of the 50S ribosomal subunit IF-1, IF-2 and IF-3 are released leaving the mature 70S translation initiation complex. This is Translation initiation factor IF-1 1 from Thiobacillus denitrificans (strain ATCC 25259 / T1).